We begin with the raw amino-acid sequence, 233 residues long: Purine nucleoside phosphorylase DeoD-type (233 aa).

H4 lines the a purine D-ribonucleoside pocket. Phosphate is bound by residues G20, R24, R43, and 87–90; that span reads RIGT. A purine D-ribonucleoside-binding positions include 179–181 and 203–204; these read EME and SD. D204 functions as the Proton donor in the catalytic mechanism.

It belongs to the PNP/UDP phosphorylase family. As to quaternary structure, homohexamer; trimer of homodimers.

The enzyme catalyses a purine D-ribonucleoside + phosphate = a purine nucleobase + alpha-D-ribose 1-phosphate. It catalyses the reaction a purine 2'-deoxy-D-ribonucleoside + phosphate = a purine nucleobase + 2-deoxy-alpha-D-ribose 1-phosphate. Functionally, catalyzes the reversible phosphorolytic breakdown of the N-glycosidic bond in the beta-(deoxy)ribonucleoside molecules, with the formation of the corresponding free purine bases and pentose-1-phosphate. The chain is Purine nucleoside phosphorylase DeoD-type from Helicobacter pylori (strain P12).